The primary structure comprises 241 residues: Demethylmenaquinone methyltransferase (241 aa).

S-adenosyl-L-methionine contacts are provided by residues Thr60, Asp81, and 106–107; that span reads DA.

The protein belongs to the class I-like SAM-binding methyltransferase superfamily. MenG/UbiE family.

It carries out the reaction a 2-demethylmenaquinol + S-adenosyl-L-methionine = a menaquinol + S-adenosyl-L-homocysteine + H(+). It participates in quinol/quinone metabolism; menaquinone biosynthesis; menaquinol from 1,4-dihydroxy-2-naphthoate: step 2/2. In terms of biological role, methyltransferase required for the conversion of demethylmenaquinol (DMKH2) to menaquinol (MKH2). The polypeptide is Demethylmenaquinone methyltransferase (Staphylococcus carnosus (strain TM300)).